The chain runs to 84 residues: Putative defensin-like protein 165 (84 aa).

An N-terminal signal peptide occupies residues 1–27 (MSTKLFSYFMLLVVLFSVLTIIPKTEA). 4 cysteine pairs are disulfide-bonded: Cys31-Cys78, Cys41-Cys60, Cys46-Cys72, and Cys50-Cys74.

The protein belongs to the DEFL family.

The protein resides in the secreted. This Arabidopsis thaliana (Mouse-ear cress) protein is Putative defensin-like protein 165 (LCR12).